The primary structure comprises 245 residues: Phycocyanobilin:ferredoxin oxidoreductase (245 aa).

The protein belongs to the HY2 family.

The catalysed reaction is (2R,3Z)-phycocyanobilin + 4 oxidized [2Fe-2S]-[ferredoxin] = biliverdin IXalpha + 4 reduced [2Fe-2S]-[ferredoxin] + 4 H(+). Catalyzes the four-electron reduction of biliverdin IX-alpha (2-electron reduction at both the A and D rings); the reaction proceeds via an isolatable 2-electron intermediate, 181,182-dihydrobiliverdin. The polypeptide is Phycocyanobilin:ferredoxin oxidoreductase (Rippkaea orientalis (strain PCC 8801 / RF-1) (Cyanothece sp. (strain PCC 8801))).